The following is a 389-amino-acid chain: Packaging protein 3 (389 aa).

Positions 1–131 (MHPVLRQMKP…VKAEVNFQTT (131 aa)) are interaction with packaging protein 1. A disordered region spans residues 350–389 (EKENPDGSVSFQQHERGTQSHENGGHAEPAYSRRQLGRFY). The segment covering 362–374 (QHERGTQSHENGG) has biased composition (basic and acidic residues).

Belongs to the adenoviridae packaging protein 3 family. As to quaternary structure, part of the genome packaging complex composed of packaging proteins 1, 2 and 3; this complex specifically binds to the packaging sequence on the left end of viral genomic DNA and performs packaging of the viral genome. Interacts with hexon-linking protein IIIa; this interaction is required to promote correct genome packaging. In terms of processing, cleaved at different sites by the viral protease during virion maturation.

The protein localises to the host nucleus. Involved in viral genome packaging through its interaction with packaging proteins 1 and 2. After proteolytic cleavage by adenovirus protease, L1 52/55k protein is removed from the capsid during viral maturation. The polypeptide is Packaging protein 3 (Canine adenovirus serotype 1 (strain CLL) (CAdV-1)).